We begin with the raw amino-acid sequence, 586 residues long: Phosphomethylpyrimidine synthase (586 aa).

The segment at 1-33 (MKQSVSAEQIELKSSLPGSKKVYVDGPREGMKV) is disordered. Basic and acidic residues predominate over residues 22 to 33 (VYVDGPREGMKV). Substrate contacts are provided by residues N193, M222, Y251, H287, 307 to 309 (SRG), 348 to 351 (DGLR), and E387. Position 391 (H391) interacts with Zn(2+). Position 414 (Y414) interacts with substrate. A Zn(2+)-binding site is contributed by H455. Positions 535, 538, and 543 each coordinate [4Fe-4S] cluster.

The protein belongs to the ThiC family. [4Fe-4S] cluster is required as a cofactor.

The catalysed reaction is 5-amino-1-(5-phospho-beta-D-ribosyl)imidazole + S-adenosyl-L-methionine = 4-amino-2-methyl-5-(phosphooxymethyl)pyrimidine + CO + 5'-deoxyadenosine + formate + L-methionine + 3 H(+). Its pathway is cofactor biosynthesis; thiamine diphosphate biosynthesis. Catalyzes the synthesis of the hydroxymethylpyrimidine phosphate (HMP-P) moiety of thiamine from aminoimidazole ribotide (AIR) in a radical S-adenosyl-L-methionine (SAM)-dependent reaction. The protein is Phosphomethylpyrimidine synthase of Bacillus cereus (strain B4264).